The following is a 367-amino-acid chain: Phosphoribosylaminoimidazole-succinocarboxamide synthase (367 aa).

The protein belongs to the SAICAR synthetase family.

The enzyme catalyses 5-amino-1-(5-phospho-D-ribosyl)imidazole-4-carboxylate + L-aspartate + ATP = (2S)-2-[5-amino-1-(5-phospho-beta-D-ribosyl)imidazole-4-carboxamido]succinate + ADP + phosphate + 2 H(+). It participates in purine metabolism; IMP biosynthesis via de novo pathway; 5-amino-1-(5-phospho-D-ribosyl)imidazole-4-carboxamide from 5-amino-1-(5-phospho-D-ribosyl)imidazole-4-carboxylate: step 1/2. The chain is Phosphoribosylaminoimidazole-succinocarboxamide synthase from Shewanella sp. (strain MR-4).